Consider the following 208-residue polypeptide: Methylthioribulose-1-phosphate dehydratase (208 aa).

Residues His98 and His100 each coordinate Zn(2+).

It belongs to the aldolase class II family. MtnB subfamily. Zn(2+) serves as cofactor.

The enzyme catalyses 5-(methylsulfanyl)-D-ribulose 1-phosphate = 5-methylsulfanyl-2,3-dioxopentyl phosphate + H2O. The protein operates within amino-acid biosynthesis; L-methionine biosynthesis via salvage pathway; L-methionine from S-methyl-5-thio-alpha-D-ribose 1-phosphate: step 2/6. Its function is as follows. Catalyzes the dehydration of methylthioribulose-1-phosphate (MTRu-1-P) into 2,3-diketo-5-methylthiopentyl-1-phosphate (DK-MTP-1-P). The chain is Methylthioribulose-1-phosphate dehydratase from Hahella chejuensis (strain KCTC 2396).